Here is a 259-residue protein sequence, read N- to C-terminus: MVKSKYLVFISVFSLLFGVFVVGFSHQGVKAEEERPMGTAFYESFDAFDDERWSKAGVWTNGQMFNATWYPEQVTADGLMRLTIAKKTTSARNYKAGELRTNDFYHYGLFEVSMKPAKVEGTVSSFFTYTGEWDWDGDPWDEIDIEFLGKDTTRIQFNYFTNGVGGNEFYYDLGFDASESFNTYAFEWREDSITWYVNGEAVHTATENIPQTPQKIMMNLWPGVGVDGWTGVFDGDNTPVYSYYDWVRYTPLQNYQIHQ.

The first 31 residues, 1 to 31, serve as a signal peptide directing secretion; sequence MVKSKYLVFISVFSLLFGVFVVGFSHQGVKA. The region spanning 35–255 is the GH16 domain; that stretch reads RPMGTAFYES…WVRYTPLQNY (221 aa). Glu142 functions as the Nucleophile in the catalytic mechanism. The Proton donor role is filled by Glu146.

It belongs to the glycosyl hydrolase 16 family.

The enzyme catalyses Hydrolysis of (1-&gt;4)-beta-D-glucosidic linkages in beta-D-glucans containing (1-&gt;3)- and (1-&gt;4)-bonds.. Its function is as follows. Hydrolyzes B-glucans containing mixed beta-1,3 and beta-1,4 linkages. This Brevibacillus brevis (Bacillus brevis) protein is Beta-glucanase (bglBB).